We begin with the raw amino-acid sequence, 173 residues long: Alkyl hydroperoxide reductase AhpD (173 aa).

Cys-131 (proton donor) is an active-site residue. Cys-131 and Cys-134 are joined by a disulfide. Catalysis depends on Cys-134, which acts as the Cysteine sulfenic acid (-SOH) intermediate.

This sequence belongs to the AhpD family.

The enzyme catalyses N(6)-[(R)-dihydrolipoyl]-L-lysyl-[lipoyl-carrier protein] + a hydroperoxide = N(6)-[(R)-lipoyl]-L-lysyl-[lipoyl-carrier protein] + an alcohol + H2O. Functionally, antioxidant protein with alkyl hydroperoxidase activity. Required for the reduction of the AhpC active site cysteine residues and for the regeneration of the AhpC enzyme activity. This is Alkyl hydroperoxide reductase AhpD from Rhizorhabdus wittichii (strain DSM 6014 / CCUG 31198 / JCM 15750 / NBRC 105917 / EY 4224 / RW1) (Sphingomonas wittichii).